The primary structure comprises 169 residues: Mediator of RNA polymerase II transcription subunit 28 (169 aa).

The interval 1–35 (MFSAQQPGPPPPNQPGAPAGLMSTPPGAKNPSSTL) is disordered. The stretch at 99 to 137 (EQVIKEDVSELRNELQRKEALIQKHLTKLRSWQQVLEEI) forms a coiled coil.

This sequence belongs to the Mediator complex subunit 28 family. Component of the Mediator complex.

Its subcellular location is the nucleus. Its function is as follows. Component of the Mediator complex, a coactivator involved in the regulated transcription of nearly all RNA polymerase II-dependent genes. Mediator functions as a bridge to convey information from gene-specific regulatory proteins to the basal RNA polymerase II transcription machinery. Mediator is recruited to promoters by direct interactions with regulatory proteins and serves as a scaffold for the assembly of a functional preinitiation complex with RNA polymerase II and the general transcription factors. The sequence is that of Mediator of RNA polymerase II transcription subunit 28 (med28) from Xenopus tropicalis (Western clawed frog).